A 276-amino-acid polypeptide reads, in one-letter code: RNA-binding protein pno-1 (276 aa).

2 disordered regions span residues 1–30 (MATS…VPST) and 62–101 (DVVM…SRVV). Acidic residues predominate over residues 8–27 (FDDEFPMEEGMPELLDDEDV). A KH domain is found at 197 to 249 (GDHVSRAIGRIAGKDGRTKLVIENTTKTRIVVANTKIHILGAYQNLKLARNAV).

This sequence belongs to the PNO1 family. In terms of assembly, part of the small subunit (SSU) processome, composed of more than 70 proteins and the RNA chaperone small nucleolar RNA (snoRNA) U3.

It is found in the nucleus. Its subcellular location is the nucleolus. Part of the small subunit (SSU) processome, first precursor of the small eukaryotic ribosomal subunit. During the assembly of the SSU processome in the nucleolus, many ribosome biogenesis factors, an RNA chaperone and ribosomal proteins associate with the nascent pre-rRNA and work in concert to generate RNA folding, modifications, rearrangements and cleavage as well as targeted degradation of pre-ribosomal RNA by the RNA exosome. Positively regulates dimethylation of two adjacent adenosines in the loop of a conserved hairpin near the 3'-end of 18S rRNA. The chain is RNA-binding protein pno-1 from Caenorhabditis briggsae.